Consider the following 89-residue polypeptide: MAKGQSLQEPFLNALRKEKVPVSIYLVNGIKLQGQIESFDQFVILLRNNVNQMVYKHAISTVVPARNVRTAPPVPTETHAQSSEEFGNI.

The 60-residue stretch at 9 to 68 (EPFLNALRKEKVPVSIYLVNGIKLQGQIESFDQFVILLRNNVNQMVYKHAISTVVPARNV) folds into the Sm domain. The segment at 70–89 (TAPPVPTETHAQSSEEFGNI) is disordered. Residues 78–89 (THAQSSEEFGNI) are compositionally biased toward polar residues.

The protein belongs to the Hfq family. In terms of assembly, homohexamer.

Its function is as follows. RNA chaperone that binds small regulatory RNA (sRNAs) and mRNAs to facilitate mRNA translational regulation in response to envelope stress, environmental stress and changes in metabolite concentrations. Also binds with high specificity to tRNAs. The sequence is that of RNA-binding protein Hfq from Alkalilimnicola ehrlichii (strain ATCC BAA-1101 / DSM 17681 / MLHE-1).